The following is a 94-amino-acid chain: Translation initiation factor 1A 2 (94 aa).

The region spanning 6–80 (GRRNLRMPND…EKANVEWRYS (75 aa)) is the S1-like domain.

This sequence belongs to the eIF-1A family.

Its function is as follows. Seems to be required for maximal rate of protein biosynthesis. Enhances ribosome dissociation into subunits and stabilizes the binding of the initiator Met-tRNA(I) to 40 S ribosomal subunits. This Halobacterium salinarum (strain ATCC 700922 / JCM 11081 / NRC-1) (Halobacterium halobium) protein is Translation initiation factor 1A 2 (eIF1A2).